Reading from the N-terminus, the 138-residue chain is Acidic phospholipase A2 Ts-A3 (138 aa).

Residues 1 to 16 form the signal peptide; sequence MRTLWIMAVLLLGVEG. Disulfide bonds link cysteine 42–cysteine 132, cysteine 44–cysteine 60, cysteine 59–cysteine 111, cysteine 65–cysteine 138, cysteine 66–cysteine 104, cysteine 73–cysteine 97, and cysteine 91–cysteine 102. Ca(2+)-binding residues include tyrosine 43, glycine 45, and glycine 47. The active site involves histidine 63. Residue aspartate 64 coordinates Ca(2+). Aspartate 105 is a catalytic residue.

The cofactor is Ca(2+). As to expression, expressed by the venom gland.

The protein resides in the secreted. The catalysed reaction is a 1,2-diacyl-sn-glycero-3-phosphocholine + H2O = a 1-acyl-sn-glycero-3-phosphocholine + a fatty acid + H(+). Snake venom phospholipase A2 (PLA2) that shows a moderate inhibition of ADP-induced human platelet aggregation when tested on platelet rich plasma. Exhibits high hydrolytic activities and prefers the anionic micelles (dPPC with deoxycholate) to the zwitterionic micelles (dPPC with Triton X-100). PLA2 catalyzes the calcium-dependent hydrolysis of the 2-acyl groups in 3-sn-phosphoglycerides. In Trimeresurus stejnegeri (Chinese green tree viper), this protein is Acidic phospholipase A2 Ts-A3.